A 232-amino-acid polypeptide reads, in one-letter code: Flagellar L-ring protein (232 aa).

A signal peptide spans M1 to G21. The N-palmitoyl cysteine moiety is linked to residue C22. The S-diacylglycerol cysteine moiety is linked to residue C22.

The protein belongs to the FlgH family. The basal body constitutes a major portion of the flagellar organelle and consists of four rings (L,P,S, and M) mounted on a central rod.

It is found in the cell outer membrane. Its subcellular location is the bacterial flagellum basal body. Functionally, assembles around the rod to form the L-ring and probably protects the motor/basal body from shearing forces during rotation. In Shigella boydii serotype 18 (strain CDC 3083-94 / BS512), this protein is Flagellar L-ring protein.